Consider the following 624-residue polypeptide: Chaperone protein HtpG (624 aa).

The segment at 1–336 (MKGQETRGFQ…SNDLPLNVSR (336 aa)) is a; substrate-binding. Residues 337–552 (EILQDSTVTR…ADEMSTQMAK (216 aa)) are b. A c region spans residues 553–624 (LFAAAGQSVP…IRRMNQLLVS (72 aa)).

Belongs to the heat shock protein 90 family. Homodimer.

It is found in the cytoplasm. Its function is as follows. Molecular chaperone. Has ATPase activity. This Salmonella paratyphi B (strain ATCC BAA-1250 / SPB7) protein is Chaperone protein HtpG.